The chain runs to 426 residues: D-tagatose-1,6-bisphosphate aldolase subunit KbaZ (426 aa).

Belongs to the GatZ/KbaZ family. KbaZ subfamily. As to quaternary structure, forms a complex with KbaY.

Its pathway is carbohydrate metabolism; D-tagatose 6-phosphate degradation; D-glyceraldehyde 3-phosphate and glycerone phosphate from D-tagatose 6-phosphate: step 2/2. Component of the tagatose-1,6-bisphosphate aldolase KbaYZ that is required for full activity and stability of the Y subunit. Could have a chaperone-like function for the proper and stable folding of KbaY. When expressed alone, KbaZ does not show any aldolase activity. The polypeptide is D-tagatose-1,6-bisphosphate aldolase subunit KbaZ (Escherichia coli O8 (strain IAI1)).